The sequence spans 191 residues: Putative endogenous retrovirus group K member 11-1 Env polyprotein (191 aa).

The truncated surface protein stretch occupies residues M1 to V191.

It belongs to the beta type-B retroviral envelope protein family. HERV class-II K(HML-8) env subfamily. As to expression, cerebellum and testis.

It is found in the virion. Its function is as follows. Retroviral envelope proteins mediate receptor recognition and membrane fusion during early infection. Endogenous envelope proteins may have kept, lost or modified their original function during evolution. This chain is Putative endogenous retrovirus group K member 11-1 Env polyprotein (ERVK11-1), found in Homo sapiens (Human).